Consider the following 447-residue polypeptide: Rab GDP dissociation inhibitor alpha (447 aa).

Ser-427 carries the phosphoserine modification.

It belongs to the Rab GDI family. As to quaternary structure, interacts with RHOH. Interacts with the non-phosphorylated forms of RAB1A, RAB3A, RAB5A, RAB5B, RAB5C, RAB8A, RAB8B, RAB10, RAB12, RAB35, and RAB43. Interacts with RAB3A.

The protein localises to the cytoplasm. It localises to the golgi apparatus. Its subcellular location is the trans-Golgi network. Its function is as follows. Regulates the GDP/GTP exchange reaction of most Rab proteins by inhibiting the dissociation of GDP from them, and the subsequent binding of GTP to them. Promotes the dissociation of GDP-bound Rab proteins from the membrane and inhibits their activation. Promotes the dissociation of RAB1A, RAB3A, RAB5A and RAB10 from membranes. This Bos taurus (Bovine) protein is Rab GDP dissociation inhibitor alpha (GDI1).